Consider the following 425-residue polypeptide: Glutamyl-tRNA reductase (425 aa).

Residues 49–52 (TCNR), Ser107, 112–114 (EPQ), and Gln118 contribute to the substrate site. The Nucleophile role is filled by Cys50. 187–192 (GAGETI) contacts NADP(+).

It belongs to the glutamyl-tRNA reductase family. Homodimer.

It carries out the reaction (S)-4-amino-5-oxopentanoate + tRNA(Glu) + NADP(+) = L-glutamyl-tRNA(Glu) + NADPH + H(+). It participates in porphyrin-containing compound metabolism; protoporphyrin-IX biosynthesis; 5-aminolevulinate from L-glutamyl-tRNA(Glu): step 1/2. Its function is as follows. Catalyzes the NADPH-dependent reduction of glutamyl-tRNA(Glu) to glutamate 1-semialdehyde (GSA). The polypeptide is Glutamyl-tRNA reductase (Pseudomonas putida (strain GB-1)).